A 103-amino-acid polypeptide reads, in one-letter code: Small ribosomal subunit protein uS10 (103 aa).

It belongs to the universal ribosomal protein uS10 family. As to quaternary structure, part of the 30S ribosomal subunit.

In terms of biological role, involved in the binding of tRNA to the ribosomes. The protein is Small ribosomal subunit protein uS10 of Buchnera aphidicola subsp. Cinara cedri (strain Cc).